Here is a 309-residue protein sequence, read N- to C-terminus: Probable manganese-dependent inorganic pyrophosphatase (309 aa).

Mn(2+)-binding residues include histidine 9, aspartate 13, aspartate 15, aspartate 75, histidine 97, and aspartate 149.

Belongs to the PPase class C family. The cofactor is Mn(2+).

The protein localises to the cytoplasm. The catalysed reaction is diphosphate + H2O = 2 phosphate + H(+). This Staphylococcus saprophyticus subsp. saprophyticus (strain ATCC 15305 / DSM 20229 / NCIMB 8711 / NCTC 7292 / S-41) protein is Probable manganese-dependent inorganic pyrophosphatase.